Here is a 356-residue protein sequence, read N- to C-terminus: Altered inheritance of mitochondria protein 23, mitochondrial (356 aa).

The transit peptide at 1–32 directs the protein to the mitochondrion; that stretch reads MLKVPLSDVLSQKMLFLKSFRYFHCTKYFSRD.

It belongs to the AIM23 family.

It is found in the mitochondrion. This is Altered inheritance of mitochondria protein 23, mitochondrial (AIM23) from Saccharomyces cerevisiae (strain RM11-1a) (Baker's yeast).